Consider the following 1917-residue polypeptide: Diacylglycerol kinase eta (1917 aa).

Residues methionine 1–histidine 10 show a composition bias toward basic and acidic residues. A disordered region spans residues methionine 1–serine 37. The span at arginine 23–serine 37 shows a compositional bias: low complexity. Positions alanine 82 to alanine 175 constitute a PH domain. 2 consecutive Phorbol-ester/DAG-type zinc fingers follow at residues histidine 195 to cysteine 245 and proline 268 to cysteine 319. A DAGKc domain is found at glycine 350–lysine 486. Disordered stretches follow at residues threonine 1015–isoleucine 1053, leucine 1114–glutamate 1149, and lysine 1380–asparagine 1399. Over residues proline 1128 to threonine 1145 the composition is skewed to polar residues. The SAM domain occupies tryptophan 1854–asparagine 1917.

This sequence belongs to the eukaryotic diacylglycerol kinase family.

The protein resides in the cytoplasm. The enzyme catalyses a 1,2-diacyl-sn-glycerol + ATP = a 1,2-diacyl-sn-glycero-3-phosphate + ADP + H(+). In terms of biological role, phosphorylates diacylglycerol (DAG) to generate phosphatidic acid (PA). This chain is Diacylglycerol kinase eta, found in Drosophila yakuba (Fruit fly).